The following is a 236-amino-acid chain: Leucyl/phenylalanyl-tRNA--protein transferase (236 aa).

This sequence belongs to the L/F-transferase family.

Its subcellular location is the cytoplasm. The enzyme catalyses N-terminal L-lysyl-[protein] + L-leucyl-tRNA(Leu) = N-terminal L-leucyl-L-lysyl-[protein] + tRNA(Leu) + H(+). It catalyses the reaction N-terminal L-arginyl-[protein] + L-leucyl-tRNA(Leu) = N-terminal L-leucyl-L-arginyl-[protein] + tRNA(Leu) + H(+). The catalysed reaction is L-phenylalanyl-tRNA(Phe) + an N-terminal L-alpha-aminoacyl-[protein] = an N-terminal L-phenylalanyl-L-alpha-aminoacyl-[protein] + tRNA(Phe). In terms of biological role, functions in the N-end rule pathway of protein degradation where it conjugates Leu, Phe and, less efficiently, Met from aminoacyl-tRNAs to the N-termini of proteins containing an N-terminal arginine or lysine. The chain is Leucyl/phenylalanyl-tRNA--protein transferase from Shewanella sp. (strain ANA-3).